The sequence spans 580 residues: Cytochrome c oxidase subunit 1 (580 aa).

The disordered stretch occupies residues 1–25; the sequence is MTAVAPRVDGHVAPQRPEPTGHARK. A helical transmembrane segment spans residues 43 to 63; that stretch reads IMYIIMSFSFFFLGGLMALLI. A Fe(II)-heme a-binding site is contributed by histidine 87. The next 6 helical transmembrane spans lie at 90–110, 122–142, 171–191, 214–234, 259–279, and 292–312; these read VMLLLYGTPIVWGFANYVLPL, LNAFGFWITTVGGVAMLAGFL, MWIIGVGATGIGSVASAINML, IFVTSVLALLIFPLLLAAALG, LFWFFGHPEVYVLALPFFGII, and FGYIGLVFATLSIGALSMAVW. Residues histidine 265 and tyrosine 269 each contribute to the Cu cation site. The 1'-histidyl-3'-tyrosine (His-Tyr) cross-link spans 265-269; that stretch reads HPEVY. Residues histidine 314 and histidine 315 each contribute to the Cu cation site. A run of 2 helical transmembrane segments spans residues 316–336 and 360–380; these read MFVTGAVLLPFFSFMTFLISV and MIWAVGFMSTFLFGGLTGIML. Histidine 398 is a heme a3 binding site. The next 3 membrane-spanning stretches (helical) occupy residues 399 to 419, 434 to 454, and 477 to 497; these read FHYTLFGTVVFASCAGVYFWF, IHFWLTFVGFHGTFMVQHWLG, and ISTIFSFLLGLSVIPFVWNVF. Residue histidine 400 participates in Fe(II)-heme a binding.

The protein belongs to the heme-copper respiratory oxidase family. As to quaternary structure, associates with subunits II, III and IV to form cytochrome c oxidase. It depends on Cu(2+) as a cofactor. Requires heme as cofactor.

The protein resides in the cell membrane. The enzyme catalyses 4 Fe(II)-[cytochrome c] + O2 + 8 H(+)(in) = 4 Fe(III)-[cytochrome c] + 2 H2O + 4 H(+)(out). Its pathway is energy metabolism; oxidative phosphorylation. In terms of biological role, cytochrome c oxidase is the component of the respiratory chain that catalyzes the reduction of oxygen to water. Subunits 1-3 form the functional core of the enzyme complex. CO I is the catalytic subunit of the enzyme. Electrons originating in cytochrome c are transferred via the copper A center of subunit 2 and heme A of subunit 1 to the bimetallic center formed by heme A3 and copper B. The sequence is that of Cytochrome c oxidase subunit 1 (ctaD) from Corynebacterium efficiens (strain DSM 44549 / YS-314 / AJ 12310 / JCM 11189 / NBRC 100395).